The following is a 475-amino-acid chain: MVRMRRKRLWASCICFAAFFFLLVTLQVITELGNSENKAPAVSSLHSGPLKPDERHASQLKKNELYSNFRTEPDTDHYPILLWWSPLTGETGRSGQCGEDVCFFTINKTYQHSQMTRAFLFYGTDFSIDSLPLPRKDHHDWALFHEESPKNNYKLFHEPAITLFNHTATFSRHSHLPLTTQYLESIEVLRSLRHMIPVQMKNSLRKRLAPLVYVQSDCNAPSDRDSYVRELMCHIEVDSYGECLHNRDLPQHLRNPSAMDDGNFYKILAQYKFILAFENAICEDYITEKLWRPLMLGVVPVYFGSPSIIDWLPSNKSAILVSSFSHPRELARYIKTLDQNDQEYEAYLEWKLKGDISNPRLLTAMKERKWGVQDVTQDNYIDTFECMVCNRVWENIRREEKGWLPQRWSAQVNHLNCPKPEAFWFSSSNPSQSSLQEMWIASFEQSKKEAWALRQLVERNRNFTTQEFWMLVFKQ.

The Cytoplasmic portion of the chain corresponds to 1–8 (MVRMRRKR). Residues 9-29 (LWASCICFAAFFFLLVTLQVI) traverse the membrane as a helical; Signal-anchor for type II membrane protein segment. At 30–475 (TELGNSENKA…QEFWMLVFKQ (446 aa)) the chain is on the lumenal side. Residues N107, N165, and N315 are each glycosylated (N-linked (GlcNAc...) asparagine). C386 and C389 form a disulfide bridge. N-linked (GlcNAc...) asparagine glycosylation is present at N462.

It belongs to the glycosyltransferase 10 family.

It localises to the endoplasmic reticulum membrane. The enzyme catalyses L-threonyl-[protein] + GDP-beta-L-fucose = 3-O-(alpha-L-fucosyl)-L-threonyl-[protein] + GDP + H(+). It catalyses the reaction L-seryl-[protein] + GDP-beta-L-fucose = 3-O-(alpha-L-fucosyl)-L-seryl-[protein] + GDP + H(+). Its pathway is protein modification; protein glycosylation. In terms of biological role, protein O-fucosyltransferase that specifically catalyzes O-fucosylation of serine or threonine residues in EMI domains of target proteins. Attaches fucose through an O-glycosidic linkage. O-fucosylation of EMI domain-containing proteins may be required for facilitating protein folding and secretion. This Gallus gallus (Chicken) protein is GDP-fucose protein O-fucosyltransferase 3 (FUT10).